The sequence spans 104 residues: Protamine-2 (104 aa).

A disordered region spans residues 1–91; the sequence is MVRYRMRSPS…RRGCRRSRRR (91 aa). A phosphoserine mark is found at Ser-8, Ser-10, and Ser-33. Residues 33–44 show a composition bias toward basic and acidic residues; that stretch reads SPERVEDYGRTE. A compositionally biased stretch (basic residues) spans 45-91; it reads RGHHHRHRRCKRLHRIHKRRRSCRRRRRHSCRHRRRHRRGCRRSRRR.

Belongs to the protamine P2 family. In terms of assembly, interacts with TDRP. Post-translationally, proteolytic processing into mature chains is required for histone eviction during spermatogenesis. Transition proteins (TNP1 and TNP2) are required for processing. In terms of tissue distribution, testis.

The protein resides in the nucleus. It localises to the chromosome. In terms of biological role, protamines substitute for histones in the chromatin of sperm during the haploid phase of spermatogenesis. They compact sperm DNA into a highly condensed, stable and inactive complex. This Rattus norvegicus (Rat) protein is Protamine-2 (Prm2).